We begin with the raw amino-acid sequence, 648 residues long: Phosphomethylpyrimidine synthase (648 aa).

Residues N236, M265, Y294, H330, S350–G352, D391–R394, and E430 contribute to the substrate site. H434 serves as a coordination point for Zn(2+). Y457 contacts substrate. Residue H498 coordinates Zn(2+). Residues C578, C581, and C586 each contribute to the [4Fe-4S] cluster site.

Belongs to the ThiC family. In terms of assembly, homodimer. [4Fe-4S] cluster is required as a cofactor.

It catalyses the reaction 5-amino-1-(5-phospho-beta-D-ribosyl)imidazole + S-adenosyl-L-methionine = 4-amino-2-methyl-5-(phosphooxymethyl)pyrimidine + CO + 5'-deoxyadenosine + formate + L-methionine + 3 H(+). It participates in cofactor biosynthesis; thiamine diphosphate biosynthesis. Functionally, catalyzes the synthesis of the hydroxymethylpyrimidine phosphate (HMP-P) moiety of thiamine from aminoimidazole ribotide (AIR) in a radical S-adenosyl-L-methionine (SAM)-dependent reaction. The chain is Phosphomethylpyrimidine synthase from Aliivibrio salmonicida (strain LFI1238) (Vibrio salmonicida (strain LFI1238)).